The primary structure comprises 229 residues: 3-isopropylmalate dehydratase small subunit (229 aa).

The disordered stretch occupies residues 198–229 (LPVKREPEQPIESAREGEYPDWQGPLADRGII). The segment covering 200–215 (VKREPEQPIESAREGE) has biased composition (basic and acidic residues).

Belongs to the LeuD family. LeuD type 1 subfamily. Heterodimer of LeuC and LeuD.

The catalysed reaction is (2R,3S)-3-isopropylmalate = (2S)-2-isopropylmalate. The protein operates within amino-acid biosynthesis; L-leucine biosynthesis; L-leucine from 3-methyl-2-oxobutanoate: step 2/4. Functionally, catalyzes the isomerization between 2-isopropylmalate and 3-isopropylmalate, via the formation of 2-isopropylmaleate. This chain is 3-isopropylmalate dehydratase small subunit, found in Bifidobacterium adolescentis (strain ATCC 15703 / DSM 20083 / NCTC 11814 / E194a).